The chain runs to 160 residues: Cyclic pyranopterin monophosphate synthase (160 aa).

Residues 74–76 (LSH) and 112–113 (ME) contribute to the substrate site. Asp-127 is an active-site residue.

It belongs to the MoaC family. Homohexamer; trimer of dimers.

The catalysed reaction is (8S)-3',8-cyclo-7,8-dihydroguanosine 5'-triphosphate = cyclic pyranopterin phosphate + diphosphate. The protein operates within cofactor biosynthesis; molybdopterin biosynthesis. Functionally, catalyzes the conversion of (8S)-3',8-cyclo-7,8-dihydroguanosine 5'-triphosphate to cyclic pyranopterin monophosphate (cPMP). This Geobacter metallireducens (strain ATCC 53774 / DSM 7210 / GS-15) protein is Cyclic pyranopterin monophosphate synthase.